Consider the following 430-residue polypeptide: MIRASAIQRTAMLLRQLRGFSTSATLADKIKVKNPIVELDGDEMTRIIWQKIKDQLILPYLDVDLKYYDLGIESRDATDDQITIDAANAIKEYGVGVKCATITPDEARVKEFHLKKMWLSPNGTIRNILGGTVFRESIIIPCIPRLIPGWEKPIVIGRHAFGDQYKATDLVINEPGRLELRFTPASGGEAQTQKVYDYTGPGVGLAMYNTDESITGFAHASFKMALAKGLPLYMSTKNTILKKYDGRFKDIFQQIYEQDYAAEFEKQGLWYEHRLIDDMVAQMIKSKGGFVMALKNYDGDVQSDIVAQGFGSLGLMTSALMTPDGKAYEAEAAHGTVTRHYRQHQQGKETSTNSIASIFAWTRGLAQRGKLDETPDVVDFASKLEQATIDTVEVDRIMTKDLALAMGKTDRSAYVTTTEFLDAVADRLKK.

A mitochondrion-targeting transit peptide spans 1 to 27 (MIRASAIQRTAMLLRQLRGFSTSATLA). NADP(+) contacts are provided by residues 101–103 (TIT) and Arg-108. Residue Thr-103 participates in substrate binding. Substrate contacts are provided by residues 120 to 126 (SPNGTIR), Arg-135, and Arg-158. Asp-277 contributes to the Mn(2+) binding site. Lys-285 provides a ligand contact to NADP(+). Asp-300 is a Mn(2+) binding site. Residues 335 to 340 (GTVTRH) and Asn-353 each bind NADP(+).

It belongs to the isocitrate and isopropylmalate dehydrogenases family. Homodimer. Requires Mg(2+) as cofactor. The cofactor is Mn(2+).

Its subcellular location is the mitochondrion. It carries out the reaction D-threo-isocitrate + NADP(+) = 2-oxoglutarate + CO2 + NADPH. Its function is as follows. Mitochondrial IDP1 may regulate flux through the tricarboxylic acid cycle and respiration. Its probably critical function is the production of NADPH. The sequence is that of Isocitrate dehydrogenase [NADP], mitochondrial (IDP1) from Candida tropicalis (Yeast).